We begin with the raw amino-acid sequence, 143 residues long: Transcriptional regulator MraZ (143 aa).

SpoVT-AbrB domains follow at residues 5 to 47 and 76 to 119; these read EYHH…PIEE and AMES…SAER.

This sequence belongs to the MraZ family. In terms of assembly, forms oligomers.

It localises to the cytoplasm. Its subcellular location is the nucleoid. This Lactobacillus gasseri (strain ATCC 33323 / DSM 20243 / BCRC 14619 / CIP 102991 / JCM 1131 / KCTC 3163 / NCIMB 11718 / NCTC 13722 / AM63) protein is Transcriptional regulator MraZ.